The chain runs to 348 residues: Guanosine ABC transporter permease protein NupP (348 aa).

The next 9 helical transmembrane spans lie at 8-28 (LLVP…IMLV), 61-81 (YILS…NIGV), 85-105 (LLVG…PAYI), 107-127 (LPLA…IPGI), 136-156 (EVIV…YIIS), 189-209 (LHLG…IINK), 237-257 (IMTS…MEGL), 277-297 (IAVA…ACLL), and 320-340 (IVIA…FVMG).

The protein belongs to the binding-protein-dependent transport system permease family. In terms of assembly, the complex is composed of two ATP-binding proteins (NupO), two transmembrane proteins (NupP and NupQ) and a solute-binding protein (NupN).

The protein localises to the cell membrane. In terms of biological role, part of an ABC transporter complex involved in the uptake of guanosine. Responsible for the translocation of the substrate across the membrane. May be a nucleoside transporter of broad specificity but with various affinities for different substrates. The chain is Guanosine ABC transporter permease protein NupP from Bacillus subtilis (strain 168).